Consider the following 392-residue polypeptide: Methylthioribose kinase (392 aa).

ATP contacts are provided by residues N38, K53, and 107–109 (EDL). D225 contacts substrate. 242–244 (DPE) contacts ATP. Position 332 (R332) interacts with substrate.

This sequence belongs to the methylthioribose kinase family. In terms of assembly, homodimer.

It carries out the reaction 5-(methylsulfanyl)-D-ribose + ATP = 5-(methylsulfanyl)-alpha-D-ribose 1-phosphate + ADP + H(+). It participates in amino-acid biosynthesis; L-methionine biosynthesis via salvage pathway; S-methyl-5-thio-alpha-D-ribose 1-phosphate from S-methyl-5'-thioadenosine (hydrolase route): step 2/2. Functionally, catalyzes the phosphorylation of methylthioribose into methylthioribose-1-phosphate. In Bacillus mycoides (strain KBAB4) (Bacillus weihenstephanensis), this protein is Methylthioribose kinase.